The sequence spans 98 residues: Feather keratin (98 aa).

N-acetylalanine is present on alanine 1.

This sequence belongs to the avian keratin family. In terms of assembly, the avian keratins (F-ker, S-ker, C-ker and B-ker) are a complex mixture of very similar polypeptides.

The polypeptide is Feather keratin (Chroicocephalus novaehollandiae (Silver gull)).